We begin with the raw amino-acid sequence, 389 residues long: D-alanyl-D-alanine carboxypeptidase DacF (389 aa).

An N-terminal signal peptide occupies residues 1–23 (MKRLLSTLLIGIMLLTFAPSAFA). The active-site Acyl-ester intermediate is Ser-64. Catalysis depends on Lys-67, which acts as the Proton acceptor. The active site involves Ser-124. Residue Lys-230 participates in substrate binding.

This sequence belongs to the peptidase S11 family.

Its subcellular location is the secreted. The enzyme catalyses Preferential cleavage: (Ac)2-L-Lys-D-Ala-|-D-Ala. Also transpeptidation of peptidyl-alanyl moieties that are N-acyl substituents of D-alanine.. The protein operates within cell wall biogenesis; peptidoglycan biosynthesis. Its function is as follows. Removes C-terminal D-alanyl residues from sugar-peptide cell wall precursors. The protein is D-alanyl-D-alanine carboxypeptidase DacF (dacF) of Bacillus subtilis (strain 168).